Consider the following 432-residue polypeptide: Casein kinase II subunit alpha-4, chloroplastic (432 aa).

A chloroplast-targeting transit peptide spans 1–55 (MALRPCTGFTISSLRNASAANNNLFSLLSFSSSSPAKRNLLLSSLQDNLRRFASS). The tract at residues 63–83 (LRNQQQQHQQQQQSRVKEKSE) is disordered. The span at 66–75 (QQQQHQQQQQ) shows a compositional bias: low complexity. In terms of domain architecture, Protein kinase spans 132 to 417 (YEVVRKVGRG…AKEAMAHPYF (286 aa)). ATP is bound by residues 138 to 146 (VGRGKYSEV) and Lys161. Catalysis depends on Asp249, which acts as the Proton acceptor.

This sequence belongs to the protein kinase superfamily. Ser/Thr protein kinase family. CK2 subfamily. As to quaternary structure, tetramer of two alpha and two beta chains. As to expression, expressed in root tips, lateral root primordia, cotyledons, leaf primordia, sepals, filaments, stigma, and anthers.

Its subcellular location is the plastid. The protein localises to the chloroplast. The catalysed reaction is L-seryl-[protein] + ATP = O-phospho-L-seryl-[protein] + ADP + H(+). The enzyme catalyses L-threonyl-[protein] + ATP = O-phospho-L-threonyl-[protein] + ADP + H(+). Casein kinases are operationally defined by their preferential utilization of acidic proteins such as caseins as substrates. The alpha chain contains the catalytic site. Involved in the regulation of various developmental processes. Involved in the regulation of plant growth and flowering time. Involved in retrograde signaling in plant responses to abscisic acid (ABA) and heat stress. May act as an enhancing factor in abiotic stress signaling through modulation of the expression of some molecular players in retrograde signaling. Phosphorylates RuBisCo activase (RCA) at Thr-78. The chain is Casein kinase II subunit alpha-4, chloroplastic from Arabidopsis thaliana (Mouse-ear cress).